A 204-amino-acid polypeptide reads, in one-letter code: Large ribosomal subunit protein uL4 (204 aa).

Residues 47–69 (KAQKNRAAVSGGGKKPWRQKGTG) are disordered.

The protein belongs to the universal ribosomal protein uL4 family. In terms of assembly, part of the 50S ribosomal subunit.

Its function is as follows. One of the primary rRNA binding proteins, this protein initially binds near the 5'-end of the 23S rRNA. It is important during the early stages of 50S assembly. It makes multiple contacts with different domains of the 23S rRNA in the assembled 50S subunit and ribosome. Forms part of the polypeptide exit tunnel. The chain is Large ribosomal subunit protein uL4 from Teredinibacter turnerae (strain ATCC 39867 / T7901).